The following is a 228-amino-acid chain: RNA pyrophosphohydrolase (228 aa).

A unknown region spans residues 1-70 (MEKRSGIGRL…KQWVKMMNDI (70 aa)). The tract at residues 71–228 (VIDKRGFRLG…VLTEFAEFIR (158 aa)) is rppH domain. The 146-residue stretch at 76-221 (GFRLGVGMVI…KRDVYQKVLT (146 aa)) folds into the Nudix hydrolase domain. A Nudix box motif is present at residues 109–130 (GGLLPNETLREALNRELDEEVG).

It in the C-terminal section; belongs to the Nudix hydrolase family. RppH subfamily. Requires a divalent metal cation as cofactor.

Functionally, accelerates the degradation of transcripts by removing pyrophosphate from the 5'-end of triphosphorylated RNA, leading to a more labile monophosphorylated state that can stimulate subsequent ribonuclease cleavage. The sequence is that of RNA pyrophosphohydrolase from Coxiella burnetii (strain RSA 493 / Nine Mile phase I).